Reading from the N-terminus, the 448-residue chain is Trk system potassium uptake protein TrkA homolog 2 (448 aa).

The region spanning 1 to 124 is the RCK N-terminal 1 domain; it reads MKAVVIGAGE…RAQVGVDIMI (124 aa). Residues 7–11, Glu-29, 70–71, and Arg-101 contribute to the NAD(+) site; these read GAGEV and TG. An RCK C-terminal 1 domain is found at 144 to 225; the sequence is IDAEMFAGGK…MADLENVFGN (82 aa). The RCK N-terminal 2 domain maps to 230-348; that stretch reads RNRILLIGCG…FEMVGIDIAV (119 aa). 232–262 serves as a coordination point for NAD(+); that stretch reads RILLIGCGIVGFYLAKIIDKDENADLKVIEY. Residues 368-448 enclose the RCK C-terminal 2 domain; the sequence is EALATIEGEK…AVRSVEKLFK (81 aa).

Its function is as follows. Part of a potassium transport system. This Methanosarcina mazei (strain ATCC BAA-159 / DSM 3647 / Goe1 / Go1 / JCM 11833 / OCM 88) (Methanosarcina frisia) protein is Trk system potassium uptake protein TrkA homolog 2 (trkA2).